The sequence spans 179 residues: Large ribosomal subunit protein uL5c (179 aa).

This sequence belongs to the universal ribosomal protein uL5 family. In terms of assembly, part of the 50S ribosomal subunit; contacts the 5S rRNA.

Its subcellular location is the plastid. It localises to the chloroplast. Binds 5S rRNA, forms part of the central protuberance of the 50S subunit. In Gracilaria tenuistipitata var. liui (Red alga), this protein is Large ribosomal subunit protein uL5c (rpl5).